The chain runs to 330 residues: MTATLNTVQDLEASVLAGTAITRDEALSLIDAPLDELSAAADRIRAQMCGDGFDMCSIINAKSGRCPENCTFCAQSIRYPTISVDSYPLITADELVRQAQENKDKGVIRFSIVTSGRKLRRDEVRHICEGVRRIKQEVGIEVCISAGLLSAEDFQALHDAGISRVHCNLETSRAYFPSICISHTFDDKIATLQAARDEGMSLCSGGILGLGESMEDRIDMALSARELGVNSFPVNVLVAIEGTPLAGTEQLRPEEVQRCVAIFRFILPQAAIRLAGGRELLGDDGKACFQSGANSAISGDMLTTTGTTIASDMALVKDLGYTVTLDHSHS.

The region spanning 48 to 278 is the Radical SAM core domain; sequence MCGDGFDMCS…QAAIRLAGGR (231 aa). [4Fe-4S] cluster is bound by residues cysteine 66, cysteine 70, and cysteine 73. Positions 111, 143, 203, and 273 each coordinate [2Fe-2S] cluster.

It belongs to the radical SAM superfamily. Biotin synthase family. Homodimer. [4Fe-4S] cluster is required as a cofactor. The cofactor is [2Fe-2S] cluster.

The enzyme catalyses (4R,5S)-dethiobiotin + (sulfur carrier)-SH + 2 reduced [2Fe-2S]-[ferredoxin] + 2 S-adenosyl-L-methionine = (sulfur carrier)-H + biotin + 2 5'-deoxyadenosine + 2 L-methionine + 2 oxidized [2Fe-2S]-[ferredoxin]. The protein operates within cofactor biosynthesis; biotin biosynthesis; biotin from 7,8-diaminononanoate: step 2/2. Catalyzes the conversion of dethiobiotin (DTB) to biotin by the insertion of a sulfur atom into dethiobiotin via a radical-based mechanism. This Corynebacterium diphtheriae (strain ATCC 700971 / NCTC 13129 / Biotype gravis) protein is Biotin synthase 2.